The primary structure comprises 463 residues: Dihydrolipoyllysine-residue succinyltransferase component of 2-oxoglutarate dehydrogenase complex, mitochondrial (463 aa).

The region spanning Ser73 to Glu148 is the Lipoyl-binding domain. Lys114 bears the N6-lipoyllysine mark. Residues Leu144–Arg237 form a disordered region. A compositionally biased stretch (low complexity) spans Glu148–Ser157. Residues Thr184–Lys212 are compositionally biased toward basic and acidic residues. Repeat copies occupy residues Ala185–Ala190, Ala191–Ala196, and Ala197–Val202. Residues Ala185 to Asp209 form a 4 X 6 AA approximate tandem repeats of A-[SP]-K-K-E-[AV] region. Residues Glu204–Asp209 form a 4; approximate repeat. Thr340 bears the Phosphothreonine mark. Residues His435 and Asp439 contribute to the active site.

Belongs to the 2-oxoacid dehydrogenase family. In terms of assembly, component of the 2-oxoglutarate dehydrogenase complex (OGDC), also called alpha-ketoglutarate dehydrogenase (KGDH) complex. The copmplex is composed of the catalytic subunits OGDH (2-oxoglutarate dehydrogenase KGD1; also called E1 subunit), DLST (dihydrolipoamide succinyltransferase KGD2; also called E2 subunit) and DLD (dihydrolipoamide dehydrogenase LPD1; also called E3 subunit), and the assembly factor KGD4. The cofactor is (R)-lipoate.

The protein resides in the mitochondrion. The catalysed reaction is N(6)-[(R)-dihydrolipoyl]-L-lysyl-[protein] + succinyl-CoA = N(6)-[(R)-S(8)-succinyldihydrolipoyl]-L-lysyl-[protein] + CoA. It functions in the pathway amino-acid degradation; L-lysine degradation via saccharopine pathway; glutaryl-CoA from L-lysine: step 6/6. In terms of biological role, the 2-oxoglutarate dehydrogenase complex catalyzes the overall conversion of 2-oxoglutarate to succinyl-CoA and CO(2). It contains multiple copies of three enzymatic components: 2-oxoglutarate dehydrogenase (E1), dihydrolipoamide succinyltransferase (E2) and lipoamide dehydrogenase (E3). The polypeptide is Dihydrolipoyllysine-residue succinyltransferase component of 2-oxoglutarate dehydrogenase complex, mitochondrial (KGD2) (Saccharomyces cerevisiae (strain ATCC 204508 / S288c) (Baker's yeast)).